The primary structure comprises 217 residues: MASLKSIIRQGKQTRSDLKQLRKSGKVPAVVYGYGTKNVSVKVDEVEFIKVIREVCRNGVIELGVGSKTIKVMVADYQFDPLKNQITHIDFLAINMSEERTVEVPVQLVGEAVGAKEGGVVEQPLFNLEVTATPDNIPEAIEVDITELNINDSLTVADVKVTGDFKIENDSAESVVTVVAPTEEPTEEEIEAMEGEQQTEEPEVVGESKEDEEKTEE.

Positions 178-217 (VVAPTEEPTEEEIEAMEGEQQTEEPEVVGESKEDEEKTEE) are disordered. Acidic residues predominate over residues 184 to 205 (EPTEEEIEAMEGEQQTEEPEVV). A compositionally biased stretch (basic and acidic residues) spans 206–217 (GESKEDEEKTEE).

Belongs to the bacterial ribosomal protein bL25 family. CTC subfamily. As to quaternary structure, part of the 50S ribosomal subunit; part of the 5S rRNA/L5/L18/L25 subcomplex. Contacts the 5S rRNA. Binds to the 5S rRNA independently of L5 and L18.

This is one of the proteins that binds to the 5S RNA in the ribosome where it forms part of the central protuberance. In Staphylococcus aureus (strain MRSA252), this protein is Large ribosomal subunit protein bL25.